The sequence spans 396 residues: ATP-dependent RNA helicase eIF4A (396 aa).

The Q motif motif lies at 22–50; sequence HKFDELKLKEVLLRGIYGYGFVDPSAIQQ. One can recognise a Helicase ATP-binding domain in the interval 53 to 223; sequence ILPIIEGHDV…DKFMNKPVRI (171 aa). Position 66-73 (66-73) interacts with ATP; the sequence is AQSGTGKT. Positions 171–174 match the DEAD box motif; the sequence is DEAD. The region spanning 234-395 is the Helicase C-terminal domain; the sequence is GIQQYYINVE…ELPANIADLF (162 aa).

This sequence belongs to the DEAD box helicase family. eIF4A subfamily. Component of the eIF4F complex, which composition varies with external and internal environmental conditions. It is composed of at least eIF4A, eIF4E and eIF4G.

The protein localises to the cytoplasm. It catalyses the reaction ATP + H2O = ADP + phosphate + H(+). Functionally, ATP-dependent RNA helicase which is a subunit of the eIF4F complex involved in cap recognition and is required for mRNA binding to ribosome. In the current model of translation initiation, eIF4A unwinds RNA secondary structures in the 5'-UTR of mRNAs which is necessary to allow efficient binding of the small ribosomal subunit, and subsequent scanning for the initiator codon. This is ATP-dependent RNA helicase eIF4A (TIF1) from Eremothecium gossypii (strain ATCC 10895 / CBS 109.51 / FGSC 9923 / NRRL Y-1056) (Yeast).